Reading from the N-terminus, the 145-residue chain is 3-hydroxyacyl-[acyl-carrier-protein] dehydratase FabZ (145 aa).

Residue His-47 is part of the active site.

Belongs to the thioester dehydratase family. FabZ subfamily.

The protein localises to the cytoplasm. It catalyses the reaction a (3R)-hydroxyacyl-[ACP] = a (2E)-enoyl-[ACP] + H2O. Functionally, involved in unsaturated fatty acids biosynthesis. Catalyzes the dehydration of short chain beta-hydroxyacyl-ACPs and long chain saturated and unsaturated beta-hydroxyacyl-ACPs. The polypeptide is 3-hydroxyacyl-[acyl-carrier-protein] dehydratase FabZ (Polaromonas sp. (strain JS666 / ATCC BAA-500)).